Here is a 144-residue protein sequence, read N- to C-terminus: Austinoid biosynthesis cluster protein S (144 aa).

The protein belongs to the trt14 isomerase family. As to quaternary structure, homodimer.

It functions in the pathway secondary metabolite biosynthesis; terpenoid biosynthesis. Part of the gene cluster that mediates the biosynthesis of calidodehydroaustin, a fungal meroterpenoid. The first step of the pathway is the synthesis of 3,5-dimethylorsellinic acid by the polyketide synthase ausA. 3,5-dimethylorsellinic acid is then prenylated by the polyprenyl transferase ausN. Further epoxidation by the FAD-dependent monooxygenase ausM and cyclization by the probable terpene cyclase ausL lead to the formation of protoaustinoid A. Protoaustinoid A is then oxidized to spiro-lactone preaustinoid A3 by the combined action of the FAD-binding monooxygenases ausB and ausC, and the dioxygenase ausE. Acid-catalyzed keto-rearrangement and ring contraction of the tetraketide portion of preaustinoid A3 by ausJ lead to the formation of preaustinoid A4. The aldo-keto reductase ausK, with the help of ausH, is involved in the next step by transforming preaustinoid A4 into isoaustinone which is in turn hydroxylated by the P450 monooxygenase ausI to form austinolide. The cytochrome P450 monooxygenase ausG modifies austinolide to austinol. Austinol is further acetylated to austin by the O-acetyltransferase ausP, which spontaneously changes to dehydroaustin. The cytochrome P450 monooxygenase ausR then converts dehydroaustin is into 7-dehydrodehydroaustin. The hydroxylation catalyzed by ausR permits the O-acetyltransferase ausQ to add an additional acetyl group to the molecule, leading to the formation of acetoxydehydroaustin. The short chain dehydrogenase ausT catalyzes the reduction of the double bond present between carbon atoms 1 and 2 to convert 7-dehydrodehydroaustin into 1,2-dihydro-7-hydroxydehydroaustin. AusQ catalyzes not only an acetylation reaction but also the addition of the PKS ausV diketide product to 1,2-dihydro-7-hydroxydehydroaustin, forming precalidodehydroaustin. Finally, the iron/alpha-ketoglutarate-dependent dioxygenase converts precalidodehydroaustin into calidodehydroaustin. AusS is necessary for austinoids production and may play a possible function as a regulator. Its function is as follows. May play a possible function as a regulator. The sequence is that of Austinoid biosynthesis cluster protein S from Aspergillus calidoustus.